The primary structure comprises 1413 residues: DNA-directed RNA polymerase subunit beta' (1413 aa).

Zn(2+) contacts are provided by Cys70, Cys72, Cys85, and Cys88. 3 residues coordinate Mg(2+): Asp460, Asp462, and Asp464. Zn(2+) contacts are provided by Cys819, Cys893, Cys900, and Cys903.

This sequence belongs to the RNA polymerase beta' chain family. The RNAP catalytic core consists of 2 alpha, 1 beta, 1 beta' and 1 omega subunit. When a sigma factor is associated with the core the holoenzyme is formed, which can initiate transcription. It depends on Mg(2+) as a cofactor. Zn(2+) is required as a cofactor.

It carries out the reaction RNA(n) + a ribonucleoside 5'-triphosphate = RNA(n+1) + diphosphate. Functionally, DNA-dependent RNA polymerase catalyzes the transcription of DNA into RNA using the four ribonucleoside triphosphates as substrates. This chain is DNA-directed RNA polymerase subunit beta', found in Burkholderia ambifaria (strain MC40-6).